The chain runs to 149 residues: 3-dehydroquinate dehydratase (149 aa).

The Proton acceptor role is filled by Tyr-23. Positions 75, 81, and 88 each coordinate substrate. His-101 acts as the Proton donor in catalysis. Substrate-binding positions include 102–103 (MS) and Arg-112.

The protein belongs to the type-II 3-dehydroquinase family. In terms of assembly, homododecamer.

The enzyme catalyses 3-dehydroquinate = 3-dehydroshikimate + H2O. The protein operates within metabolic intermediate biosynthesis; chorismate biosynthesis; chorismate from D-erythrose 4-phosphate and phosphoenolpyruvate: step 3/7. Catalyzes a trans-dehydration via an enolate intermediate. The chain is 3-dehydroquinate dehydratase from Pelobacter propionicus (strain DSM 2379 / NBRC 103807 / OttBd1).